Here is a 407-residue protein sequence, read N- to C-terminus: Endo-1,4-beta-xylanase (407 aa).

Positions 1 to 28 are cleaved as a signal peptide; sequence MRNVVRKPLTIGLALTLLLPMGMTATSA. Positions 42–406 constitute a GH10 domain; that stretch reads ALNAPQLDQR…KPAYWAIIDH (365 aa). Glutamate 187 functions as the Proton donor in the catalytic mechanism. Residue glutamate 293 is the Nucleophile of the active site.

This sequence belongs to the glycosyl hydrolase 10 (cellulase F) family.

It localises to the secreted. The enzyme catalyses Endohydrolysis of (1-&gt;4)-beta-D-xylosidic linkages in xylans.. The protein operates within glycan degradation; xylan degradation. The protein is Endo-1,4-beta-xylanase of Geobacillus stearothermophilus (Bacillus stearothermophilus).